The chain runs to 977 residues: Monofunctional C1-tetrahydrofolate synthase, mitochondrial (977 aa).

Residues 1-31 constitute a mitochondrion transit peptide; sequence MSVRLPLLLRQLGRQQLPSGPACRLRELCRS. The interval 29 to 71 is disordered; the sequence is CRSGSRSSSSGGGDPEGLRGRRLQDGQTFSSHGPGNPEAPGMD. Residues 32-347 are methylenetetrahydrofolate dehydrogenase and cyclohydrolase; that stretch reads GSRSSSSGGG…REQQHRRWRL (316 aa). Lys-188 is modified (N6-acetyllysine; alternate). An N6-succinyllysine; alternate modification is found at Lys-188. The segment at 348–977 is formyltetrahydrofolate synthetase; the sequence is HCLKLQPLSP…TETEQVKGLF (630 aa). A Phosphoserine modification is found at Ser-356. Residue 422–429 participates in ATP binding; that stretch reads TPLGEGKS. The residue at position 595 (Lys-595) is an N6-succinyllysine.

In the N-terminal section; belongs to the tetrahydrofolate dehydrogenase/cyclohydrolase family. It in the C-terminal section; belongs to the formate--tetrahydrofolate ligase family. Homodimer.

It localises to the mitochondrion. The catalysed reaction is (6S)-5,6,7,8-tetrahydrofolate + formate + ATP = (6R)-10-formyltetrahydrofolate + ADP + phosphate. Its pathway is one-carbon metabolism; tetrahydrofolate interconversion. May provide the missing metabolic reaction required to link the mitochondria and the cytoplasm in the mammalian model of one-carbon folate metabolism complementing thus the enzymatic activities of MTHFD2. The sequence is that of Monofunctional C1-tetrahydrofolate synthase, mitochondrial (Mthfd1l) from Mus musculus (Mouse).